The chain runs to 248 residues: 2,3-bisphosphoglycerate-dependent phosphoglycerate mutase (248 aa).

Residues 7 to 14, 20 to 21, Arg-59, 86 to 89, Lys-97, 113 to 114, and 182 to 183 each bind substrate; these read RHGESIWN, TG, ERHY, RR, and GN. His-8 acts as the Tele-phosphohistidine intermediate in catalysis. Glu-86 acts as the Proton donor/acceptor in catalysis.

This sequence belongs to the phosphoglycerate mutase family. BPG-dependent PGAM subfamily.

The catalysed reaction is (2R)-2-phosphoglycerate = (2R)-3-phosphoglycerate. It functions in the pathway carbohydrate degradation; glycolysis; pyruvate from D-glyceraldehyde 3-phosphate: step 3/5. Its function is as follows. Catalyzes the interconversion of 2-phosphoglycerate and 3-phosphoglycerate. In Methylacidiphilum infernorum (isolate V4) (Methylokorus infernorum (strain V4)), this protein is 2,3-bisphosphoglycerate-dependent phosphoglycerate mutase.